Consider the following 177-residue polypeptide: Alkyl hydroperoxide reductase AhpD (177 aa).

Catalysis depends on Cys-130, which acts as the Proton donor. Cys-130 and Cys-133 are oxidised to a cystine. Cys-133 acts as the Cysteine sulfenic acid (-SOH) intermediate in catalysis.

It belongs to the AhpD family. As to quaternary structure, homotrimer.

The enzyme catalyses N(6)-[(R)-dihydrolipoyl]-L-lysyl-[lipoyl-carrier protein] + a hydroperoxide = N(6)-[(R)-lipoyl]-L-lysyl-[lipoyl-carrier protein] + an alcohol + H2O. Its function is as follows. Antioxidant protein with alkyl hydroperoxidase activity. Required for the reduction of the AhpC active site cysteine residues and for the regeneration of the AhpC enzyme activity. The polypeptide is Alkyl hydroperoxide reductase AhpD (Mycobacterium bovis (strain ATCC BAA-935 / AF2122/97)).